We begin with the raw amino-acid sequence, 214 residues long: Adenylate kinase (214 aa).

10 to 15 contributes to the ATP binding site; the sequence is GAGKGT. Residues 30 to 59 are NMP; sequence STGDMLRAAVKAGTPLGLEAKKVMDAGQLV. AMP contacts are provided by residues threonine 31, arginine 36, 57–59, 85–88, and glutamine 92; these read QLV and GFPR. Positions 122 to 159 are LID; that stretch reads GRRVHPGSGRVYHVVFNPPKVEGKDDVTGEDLAIRPDD. Residues arginine 123 and 132-133 contribute to the ATP site; that span reads VY. Arginine 156 and arginine 167 together coordinate AMP. Position 200 (glutamine 200) interacts with ATP.

The protein belongs to the adenylate kinase family. In terms of assembly, monomer.

It localises to the cytoplasm. It catalyses the reaction AMP + ATP = 2 ADP. Its pathway is purine metabolism; AMP biosynthesis via salvage pathway; AMP from ADP: step 1/1. Its function is as follows. Catalyzes the reversible transfer of the terminal phosphate group between ATP and AMP. Plays an important role in cellular energy homeostasis and in adenine nucleotide metabolism. In Shewanella putrefaciens (strain CN-32 / ATCC BAA-453), this protein is Adenylate kinase.